The chain runs to 168 residues: Type-2 ice-structuring protein (168 aa).

Residues 1–17 form the signal peptide; sequence MLTVSLLVCAMMALTQA. Positions 18 to 34 are excised as a propeptide; sequence DHDGVLKGTATEAGEVS. 5 cysteine pairs are disulfide-bonded: Cys45-Cys56, Cys73-Cys163, Cys107-Cys138, Cys127-Cys149, and Cys139-Cys155. The 113-residue stretch at 52–164 folds into the C-type lectin domain; sequence HGQRCFYSEA…CPASHASICA (113 aa).

The protein localises to the secreted. Functionally, has antifreeze activity to protect fish blood from freezing at subzero sea water temperatures. Binds to ice crystals and inhibits their growth. The thermal hysteresis (TH) activity, the ability to lower the blood freezing point, is approximately 0.45 degrees Celsius at 0.15 mM for this protein. This Brachyopsis segaliensis (Sea poacher) protein is Type-2 ice-structuring protein.